The following is a 67-amino-acid chain: Large ribosomal subunit protein bL35 (67 aa).

Over residues 1-16 (MPKMKTKSGAKKRFRV) the composition is skewed to basic residues. The interval 1–25 (MPKMKTKSGAKKRFRVRPGGTVKRG) is disordered.

This sequence belongs to the bacterial ribosomal protein bL35 family.

This is Large ribosomal subunit protein bL35 from Polaromonas sp. (strain JS666 / ATCC BAA-500).